The following is a 218-amino-acid chain: Ribose-5-phosphate isomerase A (218 aa).

Substrate is bound by residues 28–31, 81–84, and 94–97; these read TGST, DGAD, and KGGG. Glutamate 103 (proton acceptor) is an active-site residue. Lysine 121 contacts substrate.

Belongs to the ribose 5-phosphate isomerase family. As to quaternary structure, homodimer.

It carries out the reaction aldehydo-D-ribose 5-phosphate = D-ribulose 5-phosphate. The protein operates within carbohydrate degradation; pentose phosphate pathway; D-ribose 5-phosphate from D-ribulose 5-phosphate (non-oxidative stage): step 1/1. In terms of biological role, catalyzes the reversible conversion of ribose-5-phosphate to ribulose 5-phosphate. This Vibrio cholerae serotype O1 (strain ATCC 39541 / Classical Ogawa 395 / O395) protein is Ribose-5-phosphate isomerase A.